Here is a 1020-residue protein sequence, read N- to C-terminus: MSTIVFGSFTCHLDAAIHQDNADRLAKAWTRPENRQVSNAHLLCRRAAESLINTYESATASAWKGLEEKLQPMFAKREFSKTVTKRKGLRCFKESSEKFIEKKLRKQYQEERERLQFLNGPDAIVNQISVDKCEASVRVPSPHIIEKPSFVTPSMKKKVVFKKVRMSEASLQLFMRRVAANAKANGQKVEIIGRKRVVGNYTTKSRLTYFRTHVRHLDGSKPRYDLVLDEATKKILQLFANTSGFHHVHKKGEVTPGMSGFVVNPMNLSDPMQVYDTDLFIVRGKHNSILVDSRCKVSKKQSNEIIHYSDPGKQFSDGFTNSFMQCKLRETDHQCTSDLDVKECGYVAALVCQAIIPCGKITCLQCAQKYSYMSQQEIRDRFSTVIEQHEKTVMDNYPQFSHVLAFLKRYRELMRVENQNYEAFKDITHMIGERKEAPFSHLNKINELIIKGGMMSAQDYIEASDHLRELARYQKNRTENIRSGSIKAFRNKISSKAHVNMQLMCDNQLDTNGNFVWGQREYHAKRFFRNYFDVIDVSEGYRRHIVRENPRGIRKLAIGNLVMSTNLAALRKQLLGEECIHFEVSKECTSKRGENFVYQCCCVTHEDGTPLESEIISPTKNHLVVGNSGDSKYVDLPTAKGGAMFIAKAGYCYINIFLAMLININEDEAKSFTKTVRDTLVPKLGTWPSMMDLATACHFLAVLYPETRNAELPRILVDHEAKIFHVVDSFGSLSTGMHVLKANTINQLISFASDTLDSNMKTYLVGGLEVDKCDEFKNVKLLIRSIYKPQIMEQVLKEEPYLLLMSVLSPGVLMALFNSGSLEKATQYWITRSHSLAAITSMLSALAAKVSLASTLNAQMSVIDEHAAVLYDSVFVGTQPYASYMMAVKTLERMKARTESDHTLNDLGFSVLRQATPHLVEKKLSPGIGASLERVKLVGKILCNLGIAAMAKTYTKTFHPKRRRRFRRQVRHLRSVITWQPVQTPERRSPMEKRRCGLLYIPVDGEAILQSHRNLTKFSS.

Residues 165–308 (RMSEASLQLF…KKQSNEIIHY (144 aa)) form the Peptidase S30 domain. Catalysis depends on for P1 proteinase activity residues histidine 216, aspartate 225, and serine 259. The Involved in interaction with stylet and aphid transmission signature appears at 360–363 (KITC). The Involved in virions binding and aphid transmission motif lies at 618–620 (PTK). The 123-residue stretch at 644 to 766 (MFIAKAGYCY…DSNMKTYLVG (123 aa)) folds into the Peptidase C6 domain. Catalysis depends on for helper component proteinase activity residues cysteine 652 and histidine 725.

It belongs to the potyviridae P3N-PIPO polyprotein family. Interacts (via PIPO domain) with host PCaP1 protein; this interaction may help to anchor the movement complex to the plasma membrane from which the complex could move to the plasmodesmata. Post-translationally, potyviral RNA is expressed as two polyproteins which undergo post-translational proteolytic processing. Genome polyprotein is processed by NIa-pro, P1 and HC-pro proteinases resulting in the production of at least ten individual proteins. P3N-PIPO is cleaved by P1 and HC-pro proteinases resulting in the production of three individual proteins. The P1 proteinase and the HC-pro cleave only their respective C-termini autocatalytically.

The protein localises to the host cell junction. The protein resides in the host plasmodesma. The catalysed reaction is Hydrolyzes a Gly-|-Gly bond at its own C-terminus, commonly in the sequence -Tyr-Xaa-Val-Gly-|-Gly, in the processing of the potyviral polyprotein.. Its function is as follows. Required for aphid transmission and also has proteolytic activity. Only cleaves a Gly-Gly dipeptide at its own C-terminus. Interacts with virions and aphid stylets. Acts as a suppressor of RNA-mediated gene silencing, also known as post-transcriptional gene silencing (PTGS), a mechanism of plant viral defense that limits the accumulation of viral RNAs. May have RNA-binding activity. In terms of biological role, allows efficient cell to cell propagation, by bypassing the host cell wall barrier. Transports viral genome to neighboring plant cells directly through plasmosdesmata, without any budding. The polypeptide is P3N-PIPO polyprotein (Plum pox potyvirus (isolate NAT) (PPV)).